The following is a 177-amino-acid chain: Dual-action ribosomal maturation protein DarP (177 aa).

Belongs to the DarP family.

The protein localises to the cytoplasm. Its function is as follows. Member of a network of 50S ribosomal subunit biogenesis factors which assembles along the 30S-50S interface, preventing incorrect 23S rRNA structures from forming. Promotes peptidyl transferase center (PTC) maturation. This is Dual-action ribosomal maturation protein DarP from Glaesserella parasuis serovar 5 (strain SH0165) (Haemophilus parasuis).